A 158-amino-acid polypeptide reads, in one-letter code: Cyclic pyranopterin monophosphate synthase (158 aa).

Substrate contacts are provided by residues leucine 75–histidine 77 and methionine 113–glutamate 114. The active site involves aspartate 128.

Belongs to the MoaC family. Homohexamer; trimer of dimers.

The catalysed reaction is (8S)-3',8-cyclo-7,8-dihydroguanosine 5'-triphosphate = cyclic pyranopterin phosphate + diphosphate. It functions in the pathway cofactor biosynthesis; molybdopterin biosynthesis. Its function is as follows. Catalyzes the conversion of (8S)-3',8-cyclo-7,8-dihydroguanosine 5'-triphosphate to cyclic pyranopterin monophosphate (cPMP). This chain is Cyclic pyranopterin monophosphate synthase, found in Roseiflexus castenholzii (strain DSM 13941 / HLO8).